Consider the following 312-residue polypeptide: Polyamine aminopropyltransferase (312 aa).

Positions 7-247 (FFWAQEYFTP…GPLGFALAAQ (241 aa)) constitute a PABS domain. Glutamine 36 provides a ligand contact to S-methyl-5'-thioadenosine. Histidine 67 and glutamate 95 together coordinate spermidine. Residues aspartate 115 and 147–148 (DA) contribute to the S-methyl-5'-thioadenosine site. The active-site Proton acceptor is aspartate 165. Proline 174 contacts S-methyl-5'-thioadenosine.

It belongs to the spermidine/spermine synthase family. In terms of assembly, homodimer or homotetramer.

It is found in the cytoplasm. It carries out the reaction S-adenosyl 3-(methylsulfanyl)propylamine + putrescine = S-methyl-5'-thioadenosine + spermidine + H(+). Its pathway is amine and polyamine biosynthesis; spermidine biosynthesis; spermidine from putrescine: step 1/1. Its function is as follows. Catalyzes the irreversible transfer of a propylamine group from the amino donor S-adenosylmethioninamine (decarboxy-AdoMet) to putrescine (1,4-diaminobutane) to yield spermidine. In Synechococcus sp. (strain JA-3-3Ab) (Cyanobacteria bacterium Yellowstone A-Prime), this protein is Polyamine aminopropyltransferase.